Here is a 155-residue protein sequence, read N- to C-terminus: MRRRKAPVRPVLPDPVYGSKVLTKFINAVMLDGKKSTAQKVMYSALERIESKTGEKGIEVFNKAMDNIKPVMEVKSRRVGGATYQVPIEVRPARQQSLGIRWIVEAARKRNERTMMERLSNELMDAATEKGSAFKKKEDTYKMAEANKAFAHYRW.

The protein belongs to the universal ribosomal protein uS7 family. Part of the 30S ribosomal subunit. Contacts proteins S9 and S11.

Functionally, one of the primary rRNA binding proteins, it binds directly to 16S rRNA where it nucleates assembly of the head domain of the 30S subunit. Is located at the subunit interface close to the decoding center, probably blocks exit of the E-site tRNA. The polypeptide is Small ribosomal subunit protein uS7 (Sulfurovum sp. (strain NBC37-1)).